The primary structure comprises 264 residues: Ribonuclease HII (264 aa).

Residues 33–224 (GPVAGVDEVG…VRRVASGSNT (192 aa)) enclose the RNase H type-2 domain. 3 residues coordinate a divalent metal cation: D39, E40, and D133. Residues 222–264 (SNTAEVADGQPDPRDGTAQTGEGRWSKSSHPATMRATGRAQGT) form a disordered region.

The protein belongs to the RNase HII family. The cofactor is Mn(2+). Requires Mg(2+) as cofactor.

It is found in the cytoplasm. It carries out the reaction Endonucleolytic cleavage to 5'-phosphomonoester.. In terms of biological role, endonuclease that specifically degrades the RNA of RNA-DNA hybrids. This is Ribonuclease HII from Mycobacterium bovis (strain ATCC BAA-935 / AF2122/97).